Consider the following 283-residue polypeptide: Bis(5'-nucleosyl)-tetraphosphatase, symmetrical (283 aa).

The protein belongs to the Ap4A hydrolase family.

The enzyme catalyses P(1),P(4)-bis(5'-adenosyl) tetraphosphate + H2O = 2 ADP + 2 H(+). In terms of biological role, hydrolyzes diadenosine 5',5'''-P1,P4-tetraphosphate to yield ADP. The sequence is that of Bis(5'-nucleosyl)-tetraphosphatase, symmetrical from Pseudomonas paraeruginosa (strain DSM 24068 / PA7) (Pseudomonas aeruginosa (strain PA7)).